A 1034-amino-acid chain; its full sequence is Platelet endothelial aggregation receptor 1 (1034 aa).

Residues 1-18 (MPLCPLLLLALGLRLTGT) form the signal peptide. The Extracellular portion of the chain corresponds to 19 to 754 (LNSNDPNVCT…PTSPVTHNSL (736 aa)). The EMI domain occupies 23–101 (DPNVCTFWES…YYESRGACVP (79 aa)). Disulfide bonds link Cys-27–Cys-89, Cys-53–Cys-63, and Cys-88–Cys-99. Asn-150 carries an N-linked (GlcNAc...) asparagine glycan. 5 EGF-like domains span residues 181–215 (YGPACQFDCQCYGASCDPQDGACFCPPGRAGPSCN), 223–258 (DGFFCPRTYPCQNGGVPQGSQGSCSCPPGWMGVICS), 266–301 (HGPNCTQECRCHNGGLCDRFTGQCHCAPGYIGDRCQ), 309–344 (FGQDCAETCDCAPGARCFPANGACLCEHGFTGDRCT), and 398–433 (HGPGCQEHCLCLHGGLCLADSGLCRCAPGYTGPHCA). Disulfide bonds link Cys-185–Cys-196, Cys-189–Cys-203, Cys-205–Cys-214, Cys-233–Cys-246, and Cys-248–Cys-257. Asn-269 carries N-linked (GlcNAc...) asparagine glycosylation. Intrachain disulfides connect Cys-270/Cys-282, Cys-276/Cys-289, Cys-291/Cys-300, Cys-313/Cys-325, Cys-319/Cys-332, Cys-334/Cys-343, Cys-402/Cys-414, Cys-408/Cys-421, and Cys-423/Cys-432. N-linked (GlcNAc...) asparagine glycosylation occurs at Asn-474. EGF-like domains follow at residues 484-519 (WGFNCNASCQCAHDGVCSPQTGACTCTPGWHGAHCQ), 575-605 (SNTCTCKNGGTCVSENGNCVCAPGFRGPSCQ), 613-648 (YGKRCVQCKCNNNHSSCHPSDGTCSCLAGWTGPDCS), and 656-691 (WGLKCSQLCQCHHGGTCHPQDGSCICTPGWTGPNCL). 12 disulfides stabilise this stretch: Cys-488-Cys-500, Cys-494-Cys-507, Cys-509-Cys-518, Cys-578-Cys-586, Cys-580-Cys-593, Cys-595-Cys-604, Cys-617-Cys-629, Cys-622-Cys-636, Cys-638-Cys-647, Cys-660-Cys-672, Cys-666-Cys-679, and Cys-681-Cys-690. A helical transmembrane segment spans residues 755 to 775 (GAVIGIAVLGTLVVALIALFI). At 776 to 1034 (GYRQWQKGKE…PSPPSRRQDR (259 aa)) the chain is on the cytoplasmic side. Residues 823 to 883 (TLSQCSPNPP…PHERGASHLD (61 aa)) form a disordered region. The span at 851–883 (RPSRAHGRENHVTLPADWKHRREPHERGASHLD) shows a compositional bias: basic and acidic residues. A Phosphotyrosine modification is found at Tyr-923. Residues 925–1034 (TIRDLPSLPG…PSPPSRRQDR (110 aa)) are disordered. Ser-951 carries the post-translational modification Phosphoserine. A compositionally biased stretch (polar residues) spans 972–991 (DSGTYEQPSPLSHNEESLGS). Ser-1026 is modified (phosphoserine).

The protein belongs to the MEGF family. Interacts with SHC2 upon its aggregation-induced tyrosine phosphorylation. Interacts (via extracellular domain) with SVEP1. Post-translationally, phosphorylated in the intracellular domain on tyrosine residues. Phosphorylated on tyrosine residues by SRC. Tyrosine phosphorylation is detected upon platelet aggregation stimulated by collagen, TRAP and thrombin and platelet-platelet contacts but not after platelet activation. Tyrosine phosphorylation enhanced its association with SHC1 and SHC2. Phosphorylated in the intracellular domain on tyrosine residues. Phosphorylated when in the presence of SVEP1. As to expression, expressed in thymocytes, bone marrow stromal and osteogenic cells (at protein level). Strongly expressed in kidney and heart. Moderately expressed in lung, spleen, thymus, liver, brain, testis, skin and stomach. Expressed in hematopoietic stem progenitor cells.

The protein localises to the cell membrane. The protein resides in the cell projection. Its subcellular location is the lamellipodium. Required for SVEP1-mediated platelet activation, via its interaction with SVEP1 and subsequent activation of AKT/mTOR signaling. May be involved in the early stages of hematopoiesis. The sequence is that of Platelet endothelial aggregation receptor 1 (Pear1) from Mus musculus (Mouse).